Consider the following 457-residue polypeptide: Keratin, type II cytoskeletal 7 (457 aa).

Serine 2 is subject to N-acetylserine. Position 2 is a phosphoserine (serine 2). The segment at serine 2–glutamate 84 is head. O-linked (GlcNAc) serine glycosylation is present at serine 7. Residue arginine 15 is modified to Dimethylated arginine; alternate. Arginine 15 carries the omega-N-methylarginine; alternate modification. A phosphoserine mark is found at serine 47 and serine 65. The interval glutamate 84–leucine 120 is coil 1A. Residues glutamate 85–leucine 397 enclose the IF rod domain. At threonine 91 the chain carries Phosphothreonine. The tract at residues glutamine 121–glutamine 138 is linker 1. Residue lysine 124 forms a Glycyl lysine isopeptide (Lys-Gly) (interchain with G-Cter in SUMO2) linkage. The coil 1B stretch occupies residues isoleucine 139 to leucine 230. Position 173 is an N6-acetyllysine (lysine 173). A phosphoserine mark is found at serine 211, serine 246, and serine 248. The tract at residues glutamine 231 to isoleucine 254 is linker 12. The tract at residues isoleucine 255–glutamate 393 is coil 2. Residues lysine 259 and lysine 280 each participate in a glycyl lysine isopeptide (Lys-Gly) (interchain with G-Cter in SUMO2) cross-link. A Phosphothreonine modification is found at threonine 283. Residues lysine 290 and lysine 325 each participate in a glycyl lysine isopeptide (Lys-Gly) (interchain with G-Cter in SUMO2) cross-link. The interval glutamate 394–asparagine 457 is tail.

It belongs to the intermediate filament family. As to quaternary structure, heterotetramer of two type I and two type II keratins. Interacts with eukaryotic translation initiator factor 3 (eIF3) subunit EIF3S10. Interacts with GPER1. Post-translationally, arg-15 is dimethylated, probably to asymmetric dimethylarginine. As to expression, expressed in most simple epithelia tested including liver, lactating mammary gland, lung, kidney, stomach, duodenum, colon, oviduct, uterus, pancreas, epididymis, prostate, preputial gland and mesothelium, and in most stratified epithelia tested including dorsal skin, paw/toe, tail, tongue, cervix, forestomach, and bladder. Also expressed in Henle layer of the inner root sheath of whisker follicle.

Functionally, blocks interferon-dependent interphase and stimulates DNA synthesis in cells. The sequence is that of Keratin, type II cytoskeletal 7 from Mus musculus (Mouse).